A 532-amino-acid chain; its full sequence is Chromobox protein homolog 2 (532 aa).

The tract at residues 1–66 (MEELSSVGEQ…AFQKKEHEKE (66 aa)) is involved in the interaction with H3C15 and H3C1. One can recognise a Chromo domain in the interval 12 to 70 (FAAECILSKRLRKGKLEYLVKWRGWSSKHNSWEPEENILDPRLLLAFQKKEHEKEVQNR). A compositionally biased stretch (basic and acidic residues) spans 60–69 (KKEHEKEVQN). Residues 60-204 (KKEHEKEVQN…APASKLPPPL (145 aa)) form a disordered region. A compositionally biased stretch (basic residues) spans 70–82 (RKRGKRPRGRPRK). Positions 75 to 87 (RPRGRPRKLTAMS) form a DNA-binding region, a.T hook. A compositionally biased stretch (low complexity) spans 103-119 (KSKSSSSSSSSTSSSSS). The span at 128 to 140 (LDAKRGPRGRETH) shows a compositional bias: basic and acidic residues. Glycyl lysine isopeptide (Lys-Gly) (interchain with G-Cter in SUMO2) cross-links involve residues lysine 146 and lysine 153. Residues 163–168 (KRGRKP) carry the Nuclear localization signal motif. Position 247 is an asymmetric dimethylarginine; alternate (arginine 247). The residue at position 247 (arginine 247) is an Omega-N-methylarginine; alternate. 2 disordered regions span residues 296–348 (KGEL…PAPT) and 379–493 (KGVP…SQDW). Serine 302 carries the post-translational modification Phosphoserine. The segment covering 464–478 (SSSSDSDPDSASPPS) has biased composition (low complexity). Polar residues predominate over residues 479–493 (TGQNPSVSVQTSQDW).

Component of a PRC1-like complex. The composition of the PRC1 complex may differ between the PRC1 complex in pluripotent embryonic stem cells containing RNF2, CBX7 and PCGF2, and the PRC1 complex in differentiating cells containing RNF2, CBX2, CBX4 and BMI1. May interact with H3C15, H3C1 and RNF2. Interacts (via chromodomain) with histone H3K9Me3 and H3K27me3.

It localises to the nucleus. The protein localises to the chromosome. Its function is as follows. Component of a Polycomb group (PcG) multiprotein PRC1-like complex, a complex class required to maintain the transcriptionally repressive state of many genes, including Hox genes, throughout development. PcG PRC1 complex acts via chromatin remodeling and modification of histones; it mediates monoubiquitination of histone H2A 'Lys-119', rendering chromatin heritably changed in its expressibility. Binds to histone H3 trimethylated at 'Lys-9' (H3K9me3) or at 'Lys-27' (H3K27me3). Plays a role in the lineage differentiation of the germ layers in embryonic development. Involved in sexual development, acting as activator of NR5A1 expression. The chain is Chromobox protein homolog 2 (CBX2) from Homo sapiens (Human).